The sequence spans 198 residues: Holliday junction resolvase RecU (198 aa).

Residues 1–22 form a disordered region; it reads MVNYPHKVSSQKRQTSLSQPKN. The segment covering 11-22 has biased composition (polar residues); sequence QKRQTSLSQPKN. Mg(2+)-binding residues include threonine 81, aspartate 83, glutamate 96, and glutamine 115.

This sequence belongs to the RecU family. Requires Mg(2+) as cofactor.

It is found in the cytoplasm. It carries out the reaction Endonucleolytic cleavage at a junction such as a reciprocal single-stranded crossover between two homologous DNA duplexes (Holliday junction).. Its function is as follows. Endonuclease that resolves Holliday junction intermediates in genetic recombination. Cleaves mobile four-strand junctions by introducing symmetrical nicks in paired strands. Promotes annealing of linear ssDNA with homologous dsDNA. Required for DNA repair, homologous recombination and chromosome segregation. In Streptococcus pneumoniae (strain P1031), this protein is Holliday junction resolvase RecU.